The following is a 467-amino-acid chain: Glutamate--tRNA ligase (467 aa).

The 'HIGH' region motif lies at 9–19 (PSPTGYLHIGG). The short motif at 237–241 (KLSKR) is the 'KMSKS' region element. Lys-240 is an ATP binding site.

The protein belongs to the class-I aminoacyl-tRNA synthetase family. Glutamate--tRNA ligase type 1 subfamily. Monomer.

The protein resides in the cytoplasm. It catalyses the reaction tRNA(Glu) + L-glutamate + ATP = L-glutamyl-tRNA(Glu) + AMP + diphosphate. Catalyzes the attachment of glutamate to tRNA(Glu) in a two-step reaction: glutamate is first activated by ATP to form Glu-AMP and then transferred to the acceptor end of tRNA(Glu). In Xanthomonas campestris pv. campestris (strain 8004), this protein is Glutamate--tRNA ligase.